The following is a 426-amino-acid chain: Enolase (426 aa).

A (2R)-2-phosphoglycerate-binding site is contributed by Q163. E205 functions as the Proton donor in the catalytic mechanism. Residues D242, E283, and D310 each coordinate Mg(2+). Residues K335, R364, S365, and K386 each contribute to the (2R)-2-phosphoglycerate site. The active-site Proton acceptor is K335.

It belongs to the enolase family. Mg(2+) serves as cofactor.

It localises to the cytoplasm. The protein resides in the secreted. Its subcellular location is the cell surface. It catalyses the reaction (2R)-2-phosphoglycerate = phosphoenolpyruvate + H2O. The protein operates within carbohydrate degradation; glycolysis; pyruvate from D-glyceraldehyde 3-phosphate: step 4/5. In terms of biological role, catalyzes the reversible conversion of 2-phosphoglycerate (2-PG) into phosphoenolpyruvate (PEP). It is essential for the degradation of carbohydrates via glycolysis. The polypeptide is Enolase (Paenarthrobacter aurescens (strain TC1)).